The primary structure comprises 532 residues: Putative cysteine desulfurase PbSufS (532 aa).

An N-terminal signal peptide occupies residues 1-18 (MNNESICILLLLFVKITS). The residue at position 286 (Lys286) is an N6-(pyridoxal phosphate)lysine. Residue Cys480 is the Cysteine persulfide intermediate of the active site.

This sequence belongs to the class-V pyridoxal-phosphate-dependent aminotransferase family. Csd subfamily. In terms of assembly, monomer. Interacts with SufE; interaction enhances cysteine desulfurase activity of SufS. Pyridoxal 5'-phosphate is required as a cofactor.

Its subcellular location is the plastid. The protein resides in the apicoplast. The enzyme catalyses (sulfur carrier)-H + L-cysteine = (sulfur carrier)-SH + L-alanine. It functions in the pathway cofactor biosynthesis; iron-sulfur cluster biosynthesis. Functionally, catalyzes sulfur activation and mobilization in sulfur mobilization (SUF) pathway for iron-sulfur (Fe-S) cluster biogenesis. Active when in complex with a partner protein SufE. Required for apicoplast maintenance. Plays a role in the development of sporozoites in oocysts in mosquitoes. This Plasmodium berghei (strain Anka) protein is Putative cysteine desulfurase PbSufS.